A 381-amino-acid polypeptide reads, in one-letter code: Periphilin-1 (381 aa).

Composition is skewed to basic and acidic residues over residues 1 to 28 (MWSE…DGYH), 39 to 65 (PLLD…GYSR), and 79 to 121 (RSFS…DGFR). 2 disordered regions span residues 1-65 (MWSE…GYSR) and 79-260 (RSFS…KSDE). Residues 117 to 123 (RDGFRRK) carry the Nuclear localization signal motif. K123 is covalently cross-linked (Glycyl lysine isopeptide (Lys-Gly) (interchain with G-Cter in SUMO2)). 4 positions are modified to phosphoserine: S124, S128, S147, and S154. Residues 130–156 (YSRDRSPHKRDAPFFRESPVGRKDSPH) are compositionally biased toward basic and acidic residues. Residues 157–168 (SRSGSSVSSRSY) show a composition bias toward low complexity. A compositionally biased stretch (basic residues) spans 175–187 (THSFHQSQHRKSS). Residue S181 is modified to Phosphoserine. Residue K194 forms a Glycyl lysine isopeptide (Lys-Gly) (interchain with G-Cter in SUMO2) linkage. Basic and acidic residues predominate over residues 195–208 (RQNEAIRGRGKERS). Phosphoserine is present on S211. K213 is covalently cross-linked (Glycyl lysine isopeptide (Lys-Gly) (interchain with G-Cter in SUMO2)). S215 and S219 each carry phosphoserine. Residues 217–230 (DASPSSSSAVASSK) are compositionally biased toward low complexity. Over residues 231–260 (ALDKPSRLTEKELAEAESKWANETLEKSDE) the composition is skewed to basic and acidic residues. A Glycyl lysine isopeptide (Lys-Gly) (interchain with G-Cter in SUMO2) cross-link involves residue K241. N6-acetyllysine; alternate is present on K249. A Glycyl lysine isopeptide (Lys-Gly) (interchain with G-Cter in SUMO2); alternate cross-link involves residue K249. S339 is modified (phosphoserine). K342 is covalently cross-linked (Glycyl lysine isopeptide (Lys-Gly) (interchain with G-Cter in SUMO2)).

Homodimer. Component of the HUSH complex; at least composed of TASOR, PPHLN1 and MPHOSPH8. Interacts with SIN3A and HDAC1. May interact with PPL. As to expression, ubiquitously expressed. Strong expression in the developing somites and limbs, the embryonic nervous system and the adult brain.

Its subcellular location is the nucleus. It is found in the cytoplasm. The protein localises to the chromosome. Component of the HUSH complex, a multiprotein complex that mediates epigenetic repression. The HUSH complex is recruited to genomic loci rich in H3K9me3 and is probably required to maintain transcriptional silencing by promoting recruitment of SETDB1, a histone methyltransferase that mediates further deposition of H3K9me3. In the HUSH complex, contributes to the maintenance of the complex at chromatin. Acts as a transcriptional corepressor and regulates the cell cycle, probably via the HUSH complex. The HUSH complex is also involved in the silencing of unintegrated retroviral DNA: some part of the retroviral DNA formed immediately after infection remains unintegrated in the host genome and is transcriptionally repressed. May be involved in epithelial differentiation by contributing to epidermal integrity and barrier formation. This Mus musculus (Mouse) protein is Periphilin-1.